Consider the following 309-residue polypeptide: UDP-N-acetylenolpyruvoylglucosamine reductase (309 aa).

The FAD-binding PCMH-type domain occupies 33–195; it reads VGGQAETLFR…VRARLRTRPG (163 aa). The active site involves arginine 175. The active-site Proton donor is the serine 224. Residue glutamate 294 is part of the active site.

The protein belongs to the MurB family. FAD serves as cofactor.

It is found in the cytoplasm. It catalyses the reaction UDP-N-acetyl-alpha-D-muramate + NADP(+) = UDP-N-acetyl-3-O-(1-carboxyvinyl)-alpha-D-glucosamine + NADPH + H(+). Its pathway is cell wall biogenesis; peptidoglycan biosynthesis. Cell wall formation. The sequence is that of UDP-N-acetylenolpyruvoylglucosamine reductase from Granulibacter bethesdensis (strain ATCC BAA-1260 / CGDNIH1).